The sequence spans 684 residues: Glycine--tRNA ligase beta subunit (684 aa).

Belongs to the class-II aminoacyl-tRNA synthetase family. As to quaternary structure, tetramer of two alpha and two beta subunits.

It localises to the cytoplasm. It carries out the reaction tRNA(Gly) + glycine + ATP = glycyl-tRNA(Gly) + AMP + diphosphate. This Pseudomonas syringae pv. syringae (strain B728a) protein is Glycine--tRNA ligase beta subunit.